The chain runs to 397 residues: Acetate kinase (397 aa).

Asn-7 provides a ligand contact to Mg(2+). Lys-14 is an ATP binding site. Arg-91 is a binding site for substrate. Catalysis depends on Asp-148, which acts as the Proton donor/acceptor. ATP contacts are provided by residues 208 to 212 (HLGNG), 283 to 285 (DFR), and 331 to 335 (GIGEN). A Mg(2+)-binding site is contributed by Glu-384.

Belongs to the acetokinase family. Homodimer. Mg(2+) serves as cofactor. Requires Mn(2+) as cofactor.

The protein localises to the cytoplasm. The enzyme catalyses acetate + ATP = acetyl phosphate + ADP. The protein operates within metabolic intermediate biosynthesis; acetyl-CoA biosynthesis; acetyl-CoA from acetate: step 1/2. Its function is as follows. Catalyzes the formation of acetyl phosphate from acetate and ATP. Can also catalyze the reverse reaction. The polypeptide is Acetate kinase (Treponema denticola (strain ATCC 35405 / DSM 14222 / CIP 103919 / JCM 8153 / KCTC 15104)).